The chain runs to 281 residues: Large ribosomal subunit protein uL2 (281 aa).

Positions 210-281 (RTRYAGQRPH…RGRKRGPHTR (72 aa)) are disordered. Residues 254–281 (TVGKKTRSHKARSNKFIVRGRKRGPHTR) are compositionally biased toward basic residues.

The protein belongs to the universal ribosomal protein uL2 family. As to quaternary structure, part of the 50S ribosomal subunit. Forms a bridge to the 30S subunit in the 70S ribosome.

In terms of biological role, one of the primary rRNA binding proteins. Required for association of the 30S and 50S subunits to form the 70S ribosome, for tRNA binding and peptide bond formation. It has been suggested to have peptidyltransferase activity; this is somewhat controversial. Makes several contacts with the 16S rRNA in the 70S ribosome. The sequence is that of Large ribosomal subunit protein uL2 from Limosilactobacillus reuteri subsp. reuteri (strain JCM 1112) (Lactobacillus reuteri).